A 384-amino-acid chain; its full sequence is Organic solute transporter alpha-like protein 1 (384 aa).

At 1–38 the chain is on the extracellular side; sequence MEIVKTIIPHNRSYIEPPIPSATEWLANMSVMHVSCLT. 2 N-linked (GlcNAc...) asparagine glycosylation sites follow: Asn-11 and Asn-28. The chain crosses the membrane as a helical span at residues 39–59; that stretch reads IACVFVAITFLSSFFHLFFVL. Topologically, residues 60 to 70 are cytoplasmic; sequence KYVSNERIRND. The chain crosses the membrane as a helical span at residues 71-91; sequence MYALIFMFPITTFASLVGMFI. Over 92-93 the chain is Extracellular; the sequence is PR. The chain crosses the membrane as a helical span at residues 94-114; that stretch reads AAIFLYAVSLVYFMFTLFIMV. Residues 115–165 lie on the Cytoplasmic side of the membrane; the sequence is TLLFNIFGGRQEMSAYLLQRNIRVNFTVPPLCFFKFLPTVESTDQNLRRIE. The helical transmembrane segment at 166–186 threads the bilayer; the sequence is WLVFQTPIIRTLLELVSVVVS. Topologically, residues 187 to 202 are extracellular; that stretch reads MEQEGRRESVWFVFSQ. Residues 203–223 traverse the membrane as a helical segment; sequence LMALLSMCIAFYGCYVMVPLG. Residues 224–240 are Cytoplasmic-facing; sequence REKHAPYRFDFLFRTCD. The helical transmembrane segment at 241 to 261 threads the bilayer; the sequence is IAQCIYTIQKFVFEFAAAVGL. The Extracellular portion of the chain corresponds to 262–273; it reads ITSDRYLPAAAK. The chain crosses the membrane as a helical span at residues 274 to 294; it reads ALWWASFMCTWEMMLLSALCS. Residues 295 to 384 are Cytoplasmic-facing; it reads YCLRPAKCKF…FDSLSQIQGQ (90 aa).

It belongs to the OST-alpha family.

It is found in the cell membrane. Probable transporter. This chain is Organic solute transporter alpha-like protein 1 (osta-1), found in Caenorhabditis elegans.